The primary structure comprises 364 residues: Caveolae-associated protein 4 (364 aa).

The tract at residues 1–24 (MEHNGSASNADKIHQNRLSSVTED) is disordered. The stretch at 44 to 77 (VDSVQASQKRIEERHREMENAIKSVQIDLLKLSQ) forms a coiled coil. A phosphoserine mark is found at Ser-172 and Ser-173. A coiled-coil region spans residues 202-226 (FSKENMQKTRQNLDKKVNRIRTRIV). The span at 231 to 256 (RERLRQSGERLRQSGERLRQSGERFK) shows a compositional bias: basic and acidic residues. Disordered stretches follow at residues 231–283 (RERL…RTVA) and 311–339 (SDELSEPEHEAARPVYPPHEGREIPTPEP). Tyr-326 is modified (phosphotyrosine). A Phosphothreonine modification is found at Thr-336. Ser-355 carries the post-translational modification Phosphoserine.

This sequence belongs to the CAVIN family. As to quaternary structure, component of the CAVIN complex composed of CAVIN1, CAVIN2, CAVIN3 and CAVIN4. Interacts with CAVIN1, ADRA1A and ADRA1B. Interacts with CAVIN2; this augments the transactivation of NPPA. Interacts with CAV3. Interacts with MAPK1 and MAPK3.

The protein localises to the cytoplasm. It localises to the myofibril. It is found in the sarcomere. Its subcellular location is the cytosol. The protein resides in the cell membrane. The protein localises to the sarcolemma. It localises to the membrane. It is found in the caveola. Modulates the morphology of formed caveolae in cardiomyocytes, but is not required for caveolar formation. Facilitates the recruitment of MAPK1/3 to caveolae within cardiomyocytes and regulates alpha-1 adrenergic receptor-induced hypertrophic responses in cardiomyocytes through MAPK1/3 activation. Contributes to proper membrane localization and stabilization of caveolin-3 (CAV3) in cardiomyocytes. Induces RHOA activation and activates NPPA transcription and myofibrillar organization through the Rho/ROCK signaling pathway. This is Caveolae-associated protein 4 from Homo sapiens (Human).